The chain runs to 275 residues: Voltage-dependent calcium channel gamma-5 subunit (275 aa).

A run of 4 helical transmembrane segments spans residues 8-28 (ALTL…GIAV), 103-123 (FPLV…IGHI), 129-149 (ILAF…VVGL), and 181-201 (FAAI…YLFM).

It belongs to the PMP-22/EMP/MP20 family. CACNG subfamily. In terms of assembly, the L-type calcium channel is composed of five subunits: alpha-1, alpha-2/delta, beta and gamma. Acts as an auxiliary subunit for AMPA-selective glutamate receptors (AMPARs). Found in a complex with GRIA1, GRIA2, GRIA3, GRIA4, CNIH2, CNIH3, CACNG2, CACNG3, CACNG4, CACNG7 and CACNG8. Interacts with GRIA1, GRIA2, GRIA3 and GRIA4. As to expression, brain. Enriched in Bergman glia, as well as a variety of neuronal populations including locus coeruleus, olfactory bulb, lateral septal nucleus, interpeduncular nucleus, and the CA2 and rostral/medial CA1 regions of hippocampus.

The protein resides in the membrane. It is found in the postsynaptic density membrane. Regulates the gating properties of AMPA-selective glutamate receptors (AMPARs). Modulates their gating properties by accelerating their rates of activation, deactivation and desensitization. Displays subunit-specific AMPA receptor regulation. Shows specificity for GRIA1, GRIA4 and the long isoform of GRIA2. Thought to stabilize the calcium channel in an inactivated (closed) state. This chain is Voltage-dependent calcium channel gamma-5 subunit (Cacng5), found in Mus musculus (Mouse).